A 211-amino-acid chain; its full sequence is MSDSREIKKPWWFKKAKEWADEFYTRDQKLEDSDRRDLSKKYATISKASVVGAATGLSAGLGGPYAYRYYTTGALKGVKLPRTILLGVVSMVIMRNVAAKIAWDKELKKLDPSGELKQNYKSAHKTVDDVSLSDNSTSVQKKYGMMKFLKYRTAPRWAMYFEGTYQHPDRKFPNPDQMVQDLKGSRRAFPPFFSKADKFWHQIDRKDNDHT.

2 helical membrane passes run 45–67 and 82–99; these read ISKASVVGAATGLSAGLGGPYAY and RTILLGVVSMVIMRNVAA.

The protein belongs to the PUP1 family.

Its subcellular location is the mitochondrion membrane. Mitochondrial protein that contributes to the enhanced virulence of C.glabrata strains that acquired azole resistance. This is PDR1 up-regulated protein 1 from Candida glabrata (strain ATCC 2001 / BCRC 20586 / JCM 3761 / NBRC 0622 / NRRL Y-65 / CBS 138) (Yeast).